The following is a 449-amino-acid chain: Chromosomal replication initiator protein DnaA (449 aa).

The domain I, interacts with DnaA modulators stretch occupies residues 1–69 (MEKVWLEAQS…VEAISSLTSV (69 aa)). Residues 69 to 112 (VKYQIEFKITEKIPLESKPVDNFTPVIKDNEPSKETNKNIDITA) form a domain II region. Residues 113–329 (NLNPKYTFDS…GMLIRLGAYA (217 aa)) are domain III, AAA+ region. ATP contacts are provided by G157, G159, K160, and T161. The tract at residues 330-449 (SLTGSEITLN…VENLKKELIT (120 aa)) is domain IV, binds dsDNA.

This sequence belongs to the DnaA family. Oligomerizes as a right-handed, spiral filament on DNA at oriC.

The protein localises to the cytoplasm. Functionally, plays an essential role in the initiation and regulation of chromosomal replication. ATP-DnaA binds to the origin of replication (oriC) to initiate formation of the DNA replication initiation complex once per cell cycle. Binds the DnaA box (a 9 base pair repeat at the origin) and separates the double-stranded (ds)DNA. Forms a right-handed helical filament on oriC DNA; dsDNA binds to the exterior of the filament while single-stranded (ss)DNA is stabiized in the filament's interior. The ATP-DnaA-oriC complex binds and stabilizes one strand of the AT-rich DNA unwinding element (DUE), permitting loading of DNA polymerase. After initiation quickly degrades to an ADP-DnaA complex that is not apt for DNA replication. Binds acidic phospholipids. This is Chromosomal replication initiator protein DnaA from Geotalea uraniireducens (strain Rf4) (Geobacter uraniireducens).